Reading from the N-terminus, the 510-residue chain is Probable cytochrome P450 312a1 (510 aa).

Cysteine 455 is a heme binding site.

It belongs to the cytochrome P450 family. Heme is required as a cofactor.

The protein localises to the endoplasmic reticulum membrane. Its subcellular location is the microsome membrane. Its function is as follows. May be involved in the metabolism of insect hormones and in the breakdown of synthetic insecticides. This is Probable cytochrome P450 312a1 (Cyp312a1) from Drosophila melanogaster (Fruit fly).